The following is a 115-amino-acid chain: UPF0738 protein SAB0871 (115 aa).

Belongs to the UPF0738 family.

The polypeptide is UPF0738 protein SAB0871 (Staphylococcus aureus (strain bovine RF122 / ET3-1)).